The following is a 575-amino-acid chain: V-type ATP synthase alpha chain (575 aa).

238-245 lines the ATP pocket; the sequence is GPFGAGKT.

The protein belongs to the ATPase alpha/beta chains family.

It catalyses the reaction ATP + H2O + 4 H(+)(in) = ADP + phosphate + 5 H(+)(out). In terms of biological role, produces ATP from ADP in the presence of a proton gradient across the membrane. The V-type alpha chain is a catalytic subunit. This Borreliella burgdorferi (strain ZS7) (Borrelia burgdorferi) protein is V-type ATP synthase alpha chain.